The sequence spans 357 residues: NADPH HC-toxin reductase 1 (357 aa).

NADP(+)-binding positions include R40, K47, 68–69 (DL), 88–90 (VAT), Y178, K182, 207–210 (LGLV), and T222. K182 functions as the Proton donor in the catalytic mechanism.

The protein belongs to the NAD(P)-dependent epimerase/dehydratase family.

Activity is sensitive to heat, dependent on NADPH, and inhibited by p-hydroxymercuribenzoate and disulfiram. Functionally, in tandem with Hm2, NADPH-dependent Helminthosporium carbonum (HC) toxin reductase (HCTR), which inactivates HC toxin, a cyclic tetrapeptide produced by the fungus Cochliobolus carbonum to permit infection and acting as an inhibitor of host histone deacetylases (HDACs), thus conferring resistance against C.carbonum race 1 in resistant cultivars (e.g. cv. B73 and cv. Wisconsin 22). Catalyzes the production of 8-hydroxy derivative of HC-toxin via the reduction of the 8-keto group of 2-amino-9,10-epoxy-8-oxo-decanoic acid, an amino acid of the HC-toxin. The sequence is that of NADPH HC-toxin reductase 1 from Zea mays (Maize).